The primary structure comprises 312 residues: Bifunctional pinoresinol-lariciresinol reductase 2 (312 aa).

NADP(+) is bound by residues 11 to 17 (GGTGYIG), Arg36, and Lys45. The Proton acceptor role is filled by Lys138. Arg142 is a binding site for NADP(+). His270 lines the substrate pocket.

Belongs to the NmrA-type oxidoreductase family. Isoflavone reductase subfamily. As to quaternary structure, dimer.

It catalyses the reaction (+)-lariciresinol + NADP(+) = (+)-pinoresinol + NADPH + H(+). The enzyme catalyses (-)-secoisolariciresinol + NADP(+) = (+)-lariciresinol + NADPH + H(+). It carries out the reaction (-)-lariciresinol + NADP(+) = (-)-pinoresinol + NADPH + H(+). In terms of biological role, reductase involved in lignan biosynthesis. Catalyzes the enantioselective sequential conversion of (+)-pinoresinol into (+)-lariciresinol and of (+)-lariciresinol into (-)-secoisolariciresinol. Can also convert with a lower efficiency (-)-pinoresinol into (-)-lariciresinol, but not (-)-lariciresinol into (+)-secoisolariciresinol. Abstracts the 4R-hydride from the NADPH cofactor during catalysis. The protein is Bifunctional pinoresinol-lariciresinol reductase 2 (PLR_Tp2) of Thuja plicata (Western red-cedar).